A 351-amino-acid polypeptide reads, in one-letter code: MARLLIAASGTGGHLFPALALAEHLPDYQIEWLGVPDRLEQTLVGDRYPLHSIAVEGFQTRSVLKNLQILFKLIRGIFEVRHLIKTHHIDVVFTTGGYIAAPAILGARLAGIRAILHESNFIPGKVTRLLSRFCDRVALGFAGTAQYLPKAKTVWVSTPVRSPFYTPQPLDLPIPENVPLIAVIGGSQGAIAVNQLVRQCVPSWLAAGAYIVHLTGKNDPEAETFKHPHYFALPFYDNMAGLLQRANLAVSRAGAGTLTELAITGTPSILIPYPFAAEDHQAYNAQVFADAQAALLYRQAELTPEILENAVLNCLKHPETLESMAKQAQRLAVLDSAQQLATLVNGFVQVT.

Residues 11 to 13, N120, R161, S187, and Q281 contribute to the UDP-N-acetyl-alpha-D-glucosamine site; that span reads TGG.

It belongs to the glycosyltransferase 28 family. MurG subfamily.

It is found in the cell inner membrane. The enzyme catalyses di-trans,octa-cis-undecaprenyl diphospho-N-acetyl-alpha-D-muramoyl-L-alanyl-D-glutamyl-meso-2,6-diaminopimeloyl-D-alanyl-D-alanine + UDP-N-acetyl-alpha-D-glucosamine = di-trans,octa-cis-undecaprenyl diphospho-[N-acetyl-alpha-D-glucosaminyl-(1-&gt;4)]-N-acetyl-alpha-D-muramoyl-L-alanyl-D-glutamyl-meso-2,6-diaminopimeloyl-D-alanyl-D-alanine + UDP + H(+). The protein operates within cell wall biogenesis; peptidoglycan biosynthesis. Cell wall formation. Catalyzes the transfer of a GlcNAc subunit on undecaprenyl-pyrophosphoryl-MurNAc-pentapeptide (lipid intermediate I) to form undecaprenyl-pyrophosphoryl-MurNAc-(pentapeptide)GlcNAc (lipid intermediate II). The chain is UDP-N-acetylglucosamine--N-acetylmuramyl-(pentapeptide) pyrophosphoryl-undecaprenol N-acetylglucosamine transferase from Rippkaea orientalis (strain PCC 8801 / RF-1) (Cyanothece sp. (strain PCC 8801)).